The chain runs to 353 residues: Phosphate acyltransferase (353 aa).

Belongs to the PlsX family. In terms of assembly, homodimer. Probably interacts with PlsY.

It is found in the cytoplasm. It carries out the reaction a fatty acyl-[ACP] + phosphate = an acyl phosphate + holo-[ACP]. It functions in the pathway lipid metabolism; phospholipid metabolism. In terms of biological role, catalyzes the reversible formation of acyl-phosphate (acyl-PO(4)) from acyl-[acyl-carrier-protein] (acyl-ACP). This enzyme utilizes acyl-ACP as fatty acyl donor, but not acyl-CoA. This chain is Phosphate acyltransferase, found in Nitrosospira multiformis (strain ATCC 25196 / NCIMB 11849 / C 71).